Reading from the N-terminus, the 457-residue chain is Cysteine desulfurase (457 aa).

Ala127, Thr128, Gln235, Ser255, and His257 together coordinate pyridoxal 5'-phosphate. Lys258 carries the N6-(pyridoxal phosphate)lysine modification. Thr295 contributes to the pyridoxal 5'-phosphate binding site. Cys381 acts as the Cysteine persulfide intermediate in catalysis. Position 381 (Cys381) interacts with [2Fe-2S] cluster. Residue Cys381 coordinates Zn(2+). Residue Cys381 is modified to Cysteine persulfide.

It belongs to the class-V pyridoxal-phosphate-dependent aminotransferase family. NifS/IscS subfamily. In terms of assembly, homodimer. Component of the mitochondrial core iron-sulfur cluster (ISC) complex composed of NFS1, LYRM4, NDUFAB1, ISCU, FXN, and FDX2; this complex is a heterohexamer containing two copies of each monomer. Component of cyteine desulfurase complex composed of NFS1, LYRM4 and NDUFAB1; this complex contributes to the activation of cysteine desulfurase activity and NFS1 stabilization. Interacts (homodimer form) with ISCU (D-state); each monomer interacts with the C-terminal regions of each NFS1 monomer. Interacts with HSPA9. Interacts (via homodimer form) with FDX2. Interacts (via homodimer form) with FXN. Interacts with LYRM4. Component of a complex composed of FXN, NFS1, LYRM4 and ISCU. Monomer. Homodimer. Oligomer. Interacts with ISCU. Component of the cysteine desulfurase complex composed of NFS1 and LYRM4; this complex contributes to the activation of cysteine desulfurase activity. Interacts with MOCS3. It depends on pyridoxal 5'-phosphate as a cofactor. Post-translationally, N-gluconoylated. In terms of processing, cysteine persulfide intermediate is reduced by thiol-containing molecules like glutathione and L-cysteine. Persulfide reduction is a rate-limiting step of cysteine desulfurase catalytic cycle. As to expression, predominantly expressed in heart and skeletal muscle. Also found in brain, liver and pancreas.

The protein localises to the mitochondrion. It localises to the cytoplasm. Its subcellular location is the nucleus. It is found in the cytoskeleton. The protein resides in the microtubule organizing center. The protein localises to the centrosome. It carries out the reaction (sulfur carrier)-H + L-cysteine = (sulfur carrier)-SH + L-alanine. It catalyses the reaction L-cysteinyl-[cysteine desulfurase] + L-cysteine = S-sulfanyl-L-cysteinyl-[cysteine desulfurase] + L-alanine. With respect to regulation, active only in complex with LYRM4. Its function is as follows. Cysteine desulfurase, of the core iron-sulfur cluster (ISC) assembly complex, that catalyzes the desulfuration of L-cysteine to L-alanine, as component of the cysteine desulfurase complex, leading to the formation of a cysteine persulfide intermediate at the active site cysteine residue and participates in the [2Fe-2S] clusters assembly on the scaffolding protein ISCU. The persulfide is then transferred on the flexible Cys loop from the catalytic site of NFS1 to the surface of NFS1. After the NFS1-linked persulfide sulfur is transferred to one of the conserved Cys residues of the scaffold, a reaction assisted by FXN. The core iron-sulfur cluster (ISC) assembly complex is involved in the de novo synthesis of a [2Fe-2S] cluster, the first step of the mitochondrial iron-sulfur protein biogenesis. This process is initiated by the cysteine desulfurase complex (NFS1:LYRM4:NDUFAB1) that produces persulfide which is delivered on the scaffold protein ISCU in a FXN-dependent manner. Then this complex is stabilized by FDX2 which provides reducing equivalents to accomplish the [2Fe-2S] cluster assembly. Finally, the [2Fe-2S] cluster is transferred from ISCU to chaperone proteins, including HSCB, HSPA9 and GLRX5. May catalyze the desulfuration of L-cysteine to L-alanine as component of the cysteine desulfurase complex (NFS1:LYRM4), leading to the formation of a cysteine persulfide intermediate. Acts as a sulfur donor for MOCS3 by transferring the sulfur of the cysteine persulfide intermediate on MOCS3. This Homo sapiens (Human) protein is Cysteine desulfurase.